The sequence spans 93 residues: Small ribosomal subunit protein bS18 (93 aa).

The span at 1-11 (MAPSARNRKPG) shows a compositional bias: basic residues. A disordered region spans residues 1–27 (MAPSARNRKPGARSMAKAAALRKPKKK).

Belongs to the bacterial ribosomal protein bS18 family. In terms of assembly, part of the 30S ribosomal subunit. Forms a tight heterodimer with protein bS6.

Functionally, binds as a heterodimer with protein bS6 to the central domain of the 16S rRNA, where it helps stabilize the platform of the 30S subunit. This Salinispora tropica (strain ATCC BAA-916 / DSM 44818 / JCM 13857 / NBRC 105044 / CNB-440) protein is Small ribosomal subunit protein bS18.